The following is a 244-amino-acid chain: tRNA pseudouridine synthase A (244 aa).

Asp-52 acts as the Nucleophile in catalysis. Tyr-110 contributes to the substrate binding site.

This sequence belongs to the tRNA pseudouridine synthase TruA family. Homodimer.

The enzyme catalyses uridine(38/39/40) in tRNA = pseudouridine(38/39/40) in tRNA. Its function is as follows. Formation of pseudouridine at positions 38, 39 and 40 in the anticodon stem and loop of transfer RNAs. This is tRNA pseudouridine synthase A from Acetivibrio thermocellus (strain ATCC 27405 / DSM 1237 / JCM 9322 / NBRC 103400 / NCIMB 10682 / NRRL B-4536 / VPI 7372) (Clostridium thermocellum).